The following is a 174-amino-acid chain: Ribosome maturation factor RimM (174 aa).

The region spanning 97–169 (GNKFYFHEVI…KVVMDLPEGL (73 aa)) is the PRC barrel domain.

The protein belongs to the RimM family. As to quaternary structure, binds ribosomal protein uS19.

Its subcellular location is the cytoplasm. Its function is as follows. An accessory protein needed during the final step in the assembly of 30S ribosomal subunit, possibly for assembly of the head region. Essential for efficient processing of 16S rRNA. May be needed both before and after RbfA during the maturation of 16S rRNA. It has affinity for free ribosomal 30S subunits but not for 70S ribosomes. The sequence is that of Ribosome maturation factor RimM from Flavobacterium psychrophilum (strain ATCC 49511 / DSM 21280 / CIP 103535 / JIP02/86).